A 355-amino-acid polypeptide reads, in one-letter code: Phospho-N-acetylmuramoyl-pentapeptide-transferase (355 aa).

The next 10 membrane-spanning stretches (helical) occupy residues 3–23, 56–76, 80–100, 120–140, 156–176, 185–205, 224–244, 251–271, 276–296, and 330–350; these read GVLI…PWVI, VIIV…GIGF, GLLV…DDYI, AAVA…AGLL, VGII…SNAV, LAAG…FWQF, PLDV…FLWW, IFMG…IAIV, LLLV…MIQV, and FWIV…AEFL.

It belongs to the glycosyltransferase 4 family. MraY subfamily. Mg(2+) is required as a cofactor.

It localises to the cell membrane. It catalyses the reaction UDP-N-acetyl-alpha-D-muramoyl-L-alanyl-gamma-D-glutamyl-meso-2,6-diaminopimeloyl-D-alanyl-D-alanine + di-trans,octa-cis-undecaprenyl phosphate = di-trans,octa-cis-undecaprenyl diphospho-N-acetyl-alpha-D-muramoyl-L-alanyl-D-glutamyl-meso-2,6-diaminopimeloyl-D-alanyl-D-alanine + UMP. The protein operates within cell wall biogenesis; peptidoglycan biosynthesis. Functionally, catalyzes the initial step of the lipid cycle reactions in the biosynthesis of the cell wall peptidoglycan: transfers peptidoglycan precursor phospho-MurNAc-pentapeptide from UDP-MurNAc-pentapeptide onto the lipid carrier undecaprenyl phosphate, yielding undecaprenyl-pyrophosphoryl-MurNAc-pentapeptide, known as lipid I. The chain is Phospho-N-acetylmuramoyl-pentapeptide-transferase from Frankia casuarinae (strain DSM 45818 / CECT 9043 / HFP020203 / CcI3).